Here is a 326-residue protein sequence, read N- to C-terminus: Mitochondrial glycine transporter (326 aa).

Solcar repeat units follow at residues 45–134 (HPVI…SKQY), 141–225 (PTAL…TRTA), and 237–321 (LIPL…MMAR). A run of 6 helical transmembrane segments spans residues 51–76 (FLCG…TRLQ), 109–135 (GMSP…KQYF), 147–172 (VILG…TRYE), 200–223 (GLTA…SQTR), 241–267 (INFS…KTHM), and 296–314 (GSVP…AWTV).

This sequence belongs to the mitochondrial carrier (TC 2.A.29) family. SLC25A38 subfamily.

The protein resides in the mitochondrion inner membrane. The catalysed reaction is glycine(in) = glycine(out). In terms of biological role, mitochondrial glycine transporter that imports glycine into the mitochondrial matrix. Plays an important role in providing glycine for the first enzymatic step in heme biosynthesis, the condensation of glycine with succinyl-CoA to produce 5-aminolevulinate (ALA) in the mitochondrial matrix. Required during erythropoiesis. Its function is as follows. Plays a role as pro-apoptotic protein that induces caspase-dependent apoptosis. In Mus musculus (Mouse), this protein is Mitochondrial glycine transporter.